A 199-amino-acid chain; its full sequence is Hematopoietic prostaglandin D synthase (199 aa).

The GST N-terminal domain occupies 2–79 (PNYKLLYFNM…YLTKNTDLAG (78 aa)). Glutathione is bound by residues Tyr-8, Arg-14, Trp-39, 49–51 (GKI), and 63–64 (QS). Positions 81 to 199 (TALEQCQADA…WILKRPQTKL (119 aa)) constitute a GST C-terminal domain.

The protein belongs to the GST superfamily. Sigma family. In terms of assembly, homodimer. Requires glutathione as cofactor. Expressed in skin and oviduct.

The protein localises to the cytoplasm. It carries out the reaction prostaglandin H2 = prostaglandin D2. The catalysed reaction is RX + glutathione = an S-substituted glutathione + a halide anion + H(+). The enzyme catalyses 2-glyceryl-prostaglandin H2 = 2-glyceryl-prostaglandin D2. Its function is as follows. Bifunctional enzyme which catalyzes both the conversion of PGH2 to PGD2, a prostaglandin involved in smooth muscle contraction/relaxation and a potent inhibitor of platelet aggregation, and the conjugation of glutathione with a wide range of aryl halides and organic isothiocyanates. Also exhibits low glutathione-peroxidase activity. The polypeptide is Hematopoietic prostaglandin D synthase (Mus musculus (Mouse)).